The chain runs to 233 residues: MTDGLERLCRKLGYRFAEPALLRHAITHRSATKENNERLEFLGDSILNFLIADFLYSGFPRAQEGELSRLRATLVKGETLAELARELEIGDHLILGLGELKSGGYRRTSILADAFEAVIGAVYLDGGLEACRKLVSSLYRDRLETLTNEALLNLKDPKTRLQEYLQARQFPLPDYRVSAVSGEAHDQVFQVECTLNNTFPSVIGIGRSRRKAEQDAATRALALLLAENEDMNV.

Residues 5–127 (LERLCRKLGY…VIGAVYLDGG (123 aa)) form the RNase III domain. E40 contributes to the Mg(2+) binding site. D44 is a catalytic residue. Residues D113 and E116 each coordinate Mg(2+). The active site involves E116. In terms of domain architecture, DRBM spans 156–226 (DPKTRLQEYL…ATRALALLLA (71 aa)).

It belongs to the ribonuclease III family. Homodimer. Mg(2+) is required as a cofactor.

Its subcellular location is the cytoplasm. It carries out the reaction Endonucleolytic cleavage to 5'-phosphomonoester.. Digests double-stranded RNA. Involved in the processing of primary rRNA transcript to yield the immediate precursors to the large and small rRNAs (23S and 16S). Processes some mRNAs, and tRNAs when they are encoded in the rRNA operon. Processes pre-crRNA and tracrRNA of type II CRISPR loci if present in the organism. The protein is Ribonuclease 3 of Nitrosococcus oceani (strain ATCC 19707 / BCRC 17464 / JCM 30415 / NCIMB 11848 / C-107).